The primary structure comprises 272 residues: MGDMRLVVAGAAGRMGRVLVQIVQQTPGAMVSGALARADSPAIGQDAGVLAGCGEIGVKISTDPLRAVADCDGVLDFTSPASTMVLATLAAQARVVHVIGTTGLSPEHLARLDAAARHAVIVQSGNMSLGVNLLAALVEKAARTLGPEFDIEIAEMHHRAKVDAPSGTALLLGEAAAKGRNIDLPSHSLRARDGHTGARPEGAIGFASLRGGGVVGEHKVYFAGAGERLELAHVAEDRSIFARGAVKAALWGRGRKSGLYSMADVLGLGDKI.

10–15 serves as a coordination point for NAD(+); that stretch reads GAAGRM. Residue R37 coordinates NADP(+). Residues 100 to 102 and 124 to 127 each bind NAD(+); these read GTT and SGNM. The active-site Proton donor/acceptor is the H157. Residue H158 coordinates (S)-2,3,4,5-tetrahydrodipicolinate. The Proton donor role is filled by K161. Residue 167 to 168 coordinates (S)-2,3,4,5-tetrahydrodipicolinate; the sequence is GT.

The protein belongs to the DapB family.

It localises to the cytoplasm. It catalyses the reaction (S)-2,3,4,5-tetrahydrodipicolinate + NAD(+) + H2O = (2S,4S)-4-hydroxy-2,3,4,5-tetrahydrodipicolinate + NADH + H(+). The catalysed reaction is (S)-2,3,4,5-tetrahydrodipicolinate + NADP(+) + H2O = (2S,4S)-4-hydroxy-2,3,4,5-tetrahydrodipicolinate + NADPH + H(+). The protein operates within amino-acid biosynthesis; L-lysine biosynthesis via DAP pathway; (S)-tetrahydrodipicolinate from L-aspartate: step 4/4. Functionally, catalyzes the conversion of 4-hydroxy-tetrahydrodipicolinate (HTPA) to tetrahydrodipicolinate. The polypeptide is 4-hydroxy-tetrahydrodipicolinate reductase (Methylocella silvestris (strain DSM 15510 / CIP 108128 / LMG 27833 / NCIMB 13906 / BL2)).